The chain runs to 409 residues: Magnesium-protoporphyrin IX monomethyl ester [oxidative] cyclase, chloroplastic (409 aa).

2 disordered regions span residues 1–23 (MAAE…SNPS) and 36–60 (RMSA…TKKE). The N-terminal 36 residues, 1–36 (MAAEMALVKPISKFSSPKLSNPSKFLSGRRFSTVIR), are a transit peptide targeting the chloroplast. Residues 13–23 (KFSSPKLSNPS) are compositionally biased toward polar residues.

This sequence belongs to the AcsF family. Part of the FLU-containing chloroplast membrane complex composed of FLU, CRD1, PORB, PORC, CHLP and HEMA1. Interacts with YCF54 in chloroplasts. Fe cation serves as cofactor.

The protein localises to the plastid. The protein resides in the chloroplast inner membrane. It localises to the chloroplast thylakoid membrane. The enzyme catalyses Mg-protoporphyrin IX 13-monomethyl ester + 3 NADPH + 3 O2 + 2 H(+) = 3,8-divinyl protochlorophyllide a + 3 NADP(+) + 5 H2O. The protein operates within porphyrin-containing compound metabolism; chlorophyll biosynthesis. Catalytic component of the MgProto monomethylester (MgProtoME) cyclase complex that catalyzes the formation of the isocyclic ring in chlorophyll biosynthesis. Mediates the cyclase reaction, which results in the formation of divinylprotochlorophyllide (Pchlide) characteristic of all chlorophylls from magnesium-protoporphyrin IX 13-monomethyl ester (MgPMME). In Arabidopsis thaliana (Mouse-ear cress), this protein is Magnesium-protoporphyrin IX monomethyl ester [oxidative] cyclase, chloroplastic.